A 159-amino-acid chain; its full sequence is Bacterial non-heme ferritin (159 aa).

A Ferritin-like diiron domain is found at 1 to 145; the sequence is MISEKLQNAI…GIVDKIKRAG (145 aa). 5 residues coordinate Fe cation: Glu17, Glu50, His53, Glu94, and Gln127.

The protein belongs to the ferritin family. Prokaryotic subfamily. In terms of assembly, homooligomer of 24 subunits that assemble into a spherical protein shell (12 +/- 1 nM diameter) that can sequester at least 2000 iron atoms.

The enzyme catalyses 4 Fe(2+) + O2 + 6 H2O = 4 iron(III) oxide-hydroxide + 12 H(+). Functionally, may alleviate iron toxicity in the presence of oxygen. The protein is Bacterial non-heme ferritin (ftnA) of Bacteroides fragilis (strain 638R).